Consider the following 158-residue polypeptide: MAPPTIEIPQLPIPGEDNSAHPAQQIRLEQAAVPQQKRGMDLYFDKVVDFVGEHPVVGGIGGFVALYAAAGLWRAVSIRMNGGKEATKFLKGGFDPKMNTKEALAILNLTESTLTKKRVKDVHRKIMLANHPDKGGSPYLATKINEAKDFLEKRGIRK.

Topologically, residues 1–55 are mitochondrial intermembrane; the sequence is MAPPTIEIPQLPIPGEDNSAHPAQQIRLEQAAVPQQKRGMDLYFDKVVDFVGEHP. Residues 56–78 form a helical membrane-spanning segment; it reads VVGGIGGFVALYAAAGLWRAVSI. Residues 79-158 lie on the Mitochondrial matrix side of the membrane; it reads RMNGGKEATK…DFLEKRGIRK (80 aa). Residues 102–158 enclose the J domain; sequence EALAILNLTESTLTKKRVKDVHRKIMLANHPDKGGSPYLATKINEAKDFLEKRGIRK.

The protein belongs to the TIM14 family. Heterodimer with PAM16. Component of the PAM complex, at least composed of mtHsp70, MGE1, TIM44, PAM16, PAM17 and PAM18.

Its subcellular location is the mitochondrion inner membrane. Its function is as follows. Essential component of the PAM complex, a complex required for the translocation of transit peptide-containing proteins from the inner membrane into the mitochondrial matrix in an ATP-dependent manner. In the complex, it is required to stimulate activity of mtHSP70 (SSC1). The chain is Mitochondrial import inner membrane translocase subunit TIM14 (PAM18) from Eremothecium gossypii (strain ATCC 10895 / CBS 109.51 / FGSC 9923 / NRRL Y-1056) (Yeast).